Here is a 187-residue protein sequence, read N- to C-terminus: Tumor necrosis factor ligand superfamily member 4 (187 aa).

The Cytoplasmic segment spans residues 1–23; the sequence is MEGVRPLEENVGNAPRPRFERNK. Residues 24–44 traverse the membrane as a helical; Signal-anchor for type II membrane protein segment; the sequence is LLLVASVVQALGLLLCLTYVC. The Extracellular portion of the chain corresponds to 45–187; that stretch reads QHSHAPEVSL…LQNPGGYCAP (143 aa). The 120-residue stretch at 58-177 folds into the THD domain; it reads PIENIMTQLQ…SVNAGELIVI (120 aa). Cystine bridges form between Cys-74–Cys-164 and Cys-101–Cys-185. Asn-94 and Asn-156 each carry an N-linked (GlcNAc...) asparagine glycan.

Belongs to the tumor necrosis factor family. In terms of assembly, homotrimer.

The protein resides in the membrane. Its function is as follows. Cytokine that binds to TNFRSF4. Co-stimulates T-cell proliferation and cytokine production. In Oryctolagus cuniculus (Rabbit), this protein is Tumor necrosis factor ligand superfamily member 4 (TNFSF4).